The following is a 222-amino-acid chain: Octanoyltransferase (222 aa).

Residues 34–214 (GEAPSTVLLL…EFRKHEEALV (181 aa)) form the BPL/LPL catalytic domain. Residues 72 to 79 (RGGKLTWH), 144 to 146 (AIG), and 157 to 159 (GVA) contribute to the substrate site. Cys-175 functions as the Acyl-thioester intermediate in the catalytic mechanism.

It belongs to the LipB family.

It is found in the cytoplasm. It carries out the reaction octanoyl-[ACP] + L-lysyl-[protein] = N(6)-octanoyl-L-lysyl-[protein] + holo-[ACP] + H(+). It functions in the pathway protein modification; protein lipoylation via endogenous pathway; protein N(6)-(lipoyl)lysine from octanoyl-[acyl-carrier-protein]: step 1/2. In terms of biological role, catalyzes the transfer of endogenously produced octanoic acid from octanoyl-acyl-carrier-protein onto the lipoyl domains of lipoate-dependent enzymes. Lipoyl-ACP can also act as a substrate although octanoyl-ACP is likely to be the physiological substrate. The chain is Octanoyltransferase from Pseudarthrobacter chlorophenolicus (strain ATCC 700700 / DSM 12829 / CIP 107037 / JCM 12360 / KCTC 9906 / NCIMB 13794 / A6) (Arthrobacter chlorophenolicus).